The following is an 858-amino-acid chain: Elongation factor 2 (858 aa).

The 346-residue stretch at 17–362 (ANIRNMSVIA…MITIHLPSPV (346 aa)) folds into the tr-type G domain. GTP is bound at residue 26 to 33 (AHVDHGKS). Position 54 is a phosphothreonine (threonine 54). The residue at position 57 (threonine 57) is a Phosphothreonine; by EEF2K. Position 59 is a phosphothreonine (threonine 59). Lysine 152 carries the post-translational modification N6-succinyllysine. GTP-binding positions include 158–161 (NKMD) and 216–218 (SGL). At lysine 235 the chain carries N6-acetyllysine. At lysine 239 the chain carries N6-acetyllysine; alternate. Lysine 239 is covalently cross-linked (Glycyl lysine isopeptide (Lys-Gly) (interchain with G-Cter in SUMO1); alternate). At tyrosine 265 the chain carries Phosphotyrosine; by CSK. Residue lysine 272 is modified to N6-acetyllysine; alternate. The residue at position 272 (lysine 272) is an N6-succinyllysine; alternate. Lysine 275 is subject to N6-acetyllysine. A Glycyl lysine isopeptide (Lys-Gly) (interchain with G-Cter in SUMO) cross-link involves residue lysine 322. The residue at position 325 (serine 325) is a Phosphoserine. A Phosphotyrosine; by CSK modification is found at tyrosine 373. At threonine 435 the chain carries Phosphothreonine. 2 positions are modified to N6-acetyllysine: lysine 439 and lysine 445. Serine 502 carries the phosphoserine modification. Lysine 525 carries the N6,N6,N6-trimethyllysine; by EEF2KMT modification. A Glycyl lysine isopeptide (Lys-Gly) (interchain with G-Cter in SUMO) cross-link involves residue lysine 529. Lysine 572 bears the N6-succinyllysine mark. Position 595 is a phosphoserine; by CDK2 (serine 595). Residue lysine 619 is modified to N6-acetyllysine. Histidine 715 carries the post-translational modification Diphthamide.

It belongs to the TRAFAC class translation factor GTPase superfamily. Classic translation factor GTPase family. EF-G/EF-2 subfamily. Binds to 80S ribosomes. Actively translating ribosomes show mutually exclusive binding of eIF5a (EIF5A or EIF5A2) and EEF2/eEF2. Interacts with SERBP1; interaction sequesters EEF2/eEF2 at the A-site of the ribosome, thereby blocking the interaction sites of the mRNA-tRNA complex, promoting ribosome stabilization and hibernation. Interacts with HABP4; interaction takes place at the A-site of hibernating ribosomes and promotes ribosome stabilization. Component of the mRNA surveillance SURF complex, at least composed of ERF1, ERF3 (ERF3A or ERF3B), EEF2, UPF1/RENT1, SMG1, SMG8 and SMG9. Interacts with RBPMS2. Post-translationally, phosphorylation by EF-2 kinase completely inactivates EF-2; it requires prior phosphorylation by CDK2 at Ser-595 during mitotic prometaphase. Phosphorylation by CSK promotes SUMOylation, proteolytic cleavage, and nuclear translocation if the C-terminal fragment. In terms of processing, diphthamide is 2-[3-carboxyamido-3-(trimethyl-ammonio)propyl]histidine. ISGylated. Post-translationally, proteolytically processed at two sites following phosphorylation by CSK. In terms of processing, SUMOylated following phosphorylation by CSK, promotes proteolytic cleavage.

The protein localises to the cytoplasm. It localises to the nucleus. The catalysed reaction is GTP + H2O = GDP + phosphate + H(+). Its function is as follows. Catalyzes the GTP-dependent ribosomal translocation step during translation elongation. During this step, the ribosome changes from the pre-translocational (PRE) to the post-translocational (POST) state as the newly formed A-site-bound peptidyl-tRNA and P-site-bound deacylated tRNA move to the P and E sites, respectively. Catalyzes the coordinated movement of the two tRNA molecules, the mRNA and conformational changes in the ribosome. The polypeptide is Elongation factor 2 (EEF2) (Callithrix jacchus (White-tufted-ear marmoset)).